The primary structure comprises 445 residues: Phosphoglucosamine mutase (445 aa).

Ser-102 (phosphoserine intermediate) is an active-site residue. Positions 102, 241, 243, and 245 each coordinate Mg(2+). The residue at position 102 (Ser-102) is a Phosphoserine.

Belongs to the phosphohexose mutase family. Requires Mg(2+) as cofactor. In terms of processing, activated by phosphorylation.

The catalysed reaction is alpha-D-glucosamine 1-phosphate = D-glucosamine 6-phosphate. Its function is as follows. Catalyzes the conversion of glucosamine-6-phosphate to glucosamine-1-phosphate. This chain is Phosphoglucosamine mutase, found in Acinetobacter baumannii (strain ACICU).